A 297-amino-acid chain; its full sequence is Probable transcription factor vicR (297 aa).

Disordered stretches follow at residues 45–80 (LPGL…HSET) and 100–134 (TNQA…KNVH). Residues 58–67 (QKEEMRRKNA) are compositionally biased toward basic and acidic residues. Over residues 69–80 (AQMQNDSNHSET) the composition is skewed to polar residues. Residues 110 to 124 (RSREDITNSRAERHS) show a composition bias toward basic and acidic residues.

The protein resides in the nucleus. Functionally, probable transcription factor; part of the gene cluster that mediates the biosynthesis of the secondary metabolite victorin, the molecular basis for Victoria blight of oats. May play a role in the regulation of the production of victorin. The polypeptide is Probable transcription factor vicR (Bipolaris victoriae (strain FI3) (Victoria blight of oats agent)).